The following is a 555-amino-acid chain: HERV-H_2q24.1 provirus ancestral Env polyprotein (555 aa).

An N-terminal signal peptide occupies residues 1-35; it reads MILAGRAPSNTSTLMKFYSLLLYSLLFSFPFLYHP. Residues 36-515 lie on the Extracellular side of the membrane; the sequence is LPLPSYLHHT…WALSNWMSWV (480 aa). A glycan (N-linked (GlcNAc...) asparagine) is linked at Asn47. The CXXC signature appears at 64-67; it reads CWLC. 5 N-linked (GlcNAc...) asparagine glycosylation sites follow: Asn222, Asn265, Asn283, Asn352, and Asn370. The segment at 388–408 is fusion peptide; that stretch reads VIPLIPLMVGLGLSASTIALS. N-linked (GlcNAc...) asparagine glycosylation is present at Asn475. The chain crosses the membrane as a helical span at residues 516–536; the sequence is LPILSPLIPIFLLLLFGPCIF. Residues 537–555 lie on the Cytoplasmic side of the membrane; the sequence is HLVSQFIQNRIQAITNHSI.

Belongs to the gamma type-C retroviral envelope protein family. HERV class-I H env subfamily. The surface (SU) and transmembrane (TM) proteins form a heterodimer. SU and TM are attached by noncovalent interactions or by a labile interchain disulfide bond. Post-translationally, specific enzymatic cleavages in vivo yield the mature SU and TM proteins. As to expression, low expression in testis.

It is found in the virion. Its subcellular location is the cell membrane. Retroviral envelope proteins mediate receptor recognition and membrane fusion during early infection. Endogenous envelope proteins may have kept, lost or modified their original function during evolution. This endogenous envelope protein has lost its original fusogenic properties. Its function is as follows. SU mediates receptor recognition. In terms of biological role, TM anchors the envelope heterodimer to the viral membrane through one transmembrane domain. The other hydrophobic domain, called fusion peptide, mediates fusion of the viral membrane with the target cell membrane. This chain is HERV-H_2q24.1 provirus ancestral Env polyprotein, found in Homo sapiens (Human).